A 321-amino-acid chain; its full sequence is tRNA U34 carboxymethyltransferase (321 aa).

Carboxy-S-adenosyl-L-methionine is bound by residues lysine 90, tryptophan 104, lysine 109, glycine 129, 151 to 153 (DPT), 180 to 181 (IE), methionine 195, tyrosine 199, and arginine 314.

Belongs to the class I-like SAM-binding methyltransferase superfamily. CmoB family. As to quaternary structure, homotetramer.

It catalyses the reaction carboxy-S-adenosyl-L-methionine + 5-hydroxyuridine(34) in tRNA = 5-carboxymethoxyuridine(34) in tRNA + S-adenosyl-L-homocysteine + H(+). Catalyzes carboxymethyl transfer from carboxy-S-adenosyl-L-methionine (Cx-SAM) to 5-hydroxyuridine (ho5U) to form 5-carboxymethoxyuridine (cmo5U) at position 34 in tRNAs. This chain is tRNA U34 carboxymethyltransferase, found in Mannheimia succiniciproducens (strain KCTC 0769BP / MBEL55E).